Consider the following 1395-residue polypeptide: Adventurous-gliding motility protein Z (1395 aa).

The Response regulatory domain occupies 4 to 122 (RVLIVESEHD…ELAALSHGIV (119 aa)). D48 is subject to 4-aspartylphosphate. Disordered regions lie at residues 137–172 (LNGT…AMTE), 874–893 (AAES…GLRS), 919–947 (EQHA…ARAH), 1212–1249 (AAES…AAKQ), 1287–1312 (RYKS…EDDE), and 1326–1395 (AAAA…ELDK). The stretch at 213 to 911 (EGKIQILRDE…LEQTHGQLAA (699 aa)) forms a coiled coil. 2 stretches are compositionally biased toward basic and acidic residues: residues 919–928 (EQHAHQESRK) and 1228–1249 (QKER…AAKQ). Composition is skewed to low complexity over residues 1291 to 1306 (KSAT…AKPA) and 1326 to 1352 (AAAA…KKAP). Over residues 1382–1395 (EDDDWTALVDELDK) the composition is skewed to acidic residues.

In terms of assembly, interacts with MglA.

Its subcellular location is the cytoplasm. Required for adventurous-gliding motility (A motility), in response to environmental signals sensed by the frz chemosensory system. Forms ordered clusters that span the cell length and that remain stationary relative to the surface across which the cells move, serving as anchor points (focal, transient adhesion sites) that allow the bacterium to move forward. Clusters disassemble at the lagging cell pole. The polypeptide is Adventurous-gliding motility protein Z (aglZ) (Myxococcus xanthus (strain DK1622)).